The following is a 465-amino-acid chain: Catalase cnsD (465 aa).

H39 is an active-site residue. Position 331 (Y331) interacts with heme.

Belongs to the catalase family. Heme serves as cofactor.

Its pathway is alkaloid biosynthesis. Functionally, catalase; part of the gene cluster that mediates the biosynthesis of communesins, a prominent class of indole alkaloids with great potential as pharmaceuticals. Communesins are biosynthesized by the coupling of tryptamine and aurantioclavine, two building blocks derived from L-tryptophan. The L-tryptophan decarboxylase cnsB converts L-tryptophan to tryptamine, whereas the tryptophan dimethylallyltransferase cnsF converts L-tryptophan to 4-dimethylallyl tryptophan which is further transformed to aurantioclavine by the aurantioclavine synthase cnsA, probably aided by the catalase cnsD. The cytochrome P450 monooxygenase cnsC catalyzes the heterodimeric coupling between the two different indole moieties, tryptamine and aurantioclavine, to construct vicinal quaternary stereocenters and yield the heptacyclic communesin scaffold. The O-methyltransferase cnsE then methylates the communesin scaffold to produce communesin K, the simplest characterized communesin that contains the heptacyclic core. The dioxygenase cnsJ converts communesin K into communesin I. Acylation to introduce the hexadienyl group at position N16 of communesin I by the acyltransferase cnsK leads to the production of communesin B. The hexadienyl group is produced by the highly reducing polyketide synthase cnsI, before being hydrolytically removed from cnsI by the serine hydrolase cnsH, converted into hexadienyl-CoA by the CoA ligase cnsG, and then transferred to communesin I by cnsK. Surprisingly, cnsK may also be a promiscuous acyltransferase that can tolerate a range of acyl groups, including acetyl-, propionyl-, and butyryl-CoA, which lead to communesins A, G and H respectively. The roles of the alpha-ketoglutarate-dependent dioxygenases cnsM and cnsP have still to be determined. This is Catalase cnsD from Penicillium expansum (Blue mold rot fungus).